The primary structure comprises 424 residues: Riboflavin biosynthesis protein RibBA (424 aa).

The interval 1–204 (MTRFDSIERA…IADLIAWRRK (204 aa)) is DHBP synthase. D-ribulose 5-phosphate is bound by residues 28 to 29 (RE), aspartate 33, 141 to 145 (RPGHT), and glutamate 165. Mg(2+) is bound at residue glutamate 29. Mg(2+) is bound at residue histidine 144. A GTP cyclohydrolase II region spans residues 205–424 (HEKHVLRIAE…QNTAQPGTAL (220 aa)). A GTP-binding site is contributed by 259-263 (RVHSE). Zn(2+) contacts are provided by cysteine 264, cysteine 275, and cysteine 277. GTP contacts are provided by residues glutamine 280, 303 to 305 (EGR), and threonine 325. The Proton acceptor; for GTP cyclohydrolase activity role is filled by aspartate 337. Arginine 339 functions as the Nucleophile; for GTP cyclohydrolase activity in the catalytic mechanism. The GTP site is built by threonine 360 and lysine 365.

It in the N-terminal section; belongs to the DHBP synthase family. The protein in the C-terminal section; belongs to the GTP cyclohydrolase II family. Mg(2+) is required as a cofactor. It depends on Mn(2+) as a cofactor. The cofactor is Zn(2+).

It carries out the reaction D-ribulose 5-phosphate = (2S)-2-hydroxy-3-oxobutyl phosphate + formate + H(+). The enzyme catalyses GTP + 4 H2O = 2,5-diamino-6-hydroxy-4-(5-phosphoribosylamino)-pyrimidine + formate + 2 phosphate + 3 H(+). Its pathway is cofactor biosynthesis; riboflavin biosynthesis; 2-hydroxy-3-oxobutyl phosphate from D-ribulose 5-phosphate: step 1/1. It functions in the pathway cofactor biosynthesis; riboflavin biosynthesis; 5-amino-6-(D-ribitylamino)uracil from GTP: step 1/4. Its function is as follows. Catalyzes the conversion of D-ribulose 5-phosphate to formate and 3,4-dihydroxy-2-butanone 4-phosphate. Catalyzes the conversion of GTP to 2,5-diamino-6-ribosylamino-4(3H)-pyrimidinone 5'-phosphate (DARP), formate and pyrophosphate. In Rhodococcus erythropolis (strain PR4 / NBRC 100887), this protein is Riboflavin biosynthesis protein RibBA.